Consider the following 298-residue polypeptide: ADP/ATP translocase 3 (298 aa).

Methionine 1 carries the post-translational modification N-acetylmethionine. The Mitochondrial intermembrane segment spans residues 1-7 (MTEQAIS). Threonine 2 is modified (N-acetylthreonine; in ADP/ATP translocase 3, N-terminally processed). The stretch at 6–98 (ISFAKDFLAG…FAFKDKYKQI (93 aa)) is one Solcar 1 repeat. A helical membrane pass occupies residues 8 to 37 (FAKDFLAGGIAAAISKTAVAPIERVKLLLQ). The Mitochondrial matrix portion of the chain corresponds to 38 to 74 (VQHASKQIAADKQYKGIVDCIVRIPKEQGVLSFWRGN). An N6,N6,N6-trimethyllysine modification is found at lysine 52. A helical transmembrane segment spans residues 75-99 (LANVIRYFPTQALNFAFKDKYKQIF). 2 residues coordinate ADP: arginine 80 and lysine 92. At 100–109 (LGGVDKHTQF) the chain is on the mitochondrial intermembrane side. Lysine 105 carries the N6-acetyllysine modification. The chain crosses the membrane as a helical span at residues 110–130 (WRYFAGNLASGGAAGATSLCF). Solcar repeat units follow at residues 111–201 (RYFA…AKGM) and 212–297 (VSWM…LKKV). Residues 131 to 178 (VYPLDFARTRLAADVGKSGTEREFRGLGDCLVKITKSDGIRGLYQGFS) are Mitochondrial matrix-facing. A helical transmembrane segment spans residues 179–199 (VSVQGIIIYRAAYFGVYDTAK). Residues 200 to 210 (GMLPDPKNTHI) are Mitochondrial intermembrane-facing. The chain crosses the membrane as a helical span at residues 211 to 231 (VVSWMIAQTVTAVAGVVSYPF). Topologically, residues 232–273 (DTVRRRMMMQSGRKGADIMYTGTVDCWRKIFRDEGGKAFFKG) are mitochondrial matrix. Residue arginine 235 coordinates ADP. Residues 235–240 (RRRMMM) form an important for transport activity region. The short motif at 235-240 (RRRMMM) is the Nucleotide carrier signature motif element. The residue at position 268 (lysine 268) is an N6-acetyllysine. Residues 274–291 (AWSNVLRGMGGAFVLVLY) form a helical membrane-spanning segment. At 292–298 (DELKKVI) the chain is on the mitochondrial intermembrane side.

Belongs to the mitochondrial carrier (TC 2.A.29) family. In terms of assembly, monomer. Found in a complex with ARL2, ARL2BP and SLC25A6/ANT3. (Microbial infection) Interacts with influenza A virus PB1-F2 protein. As to quaternary structure, (Microbial infection) Interacts with HIV-1 Vpr. Trimethylated by ANTKMT at Lys-52. As to expression, expressed in erythrocytes (at protein level).

It is found in the mitochondrion inner membrane. The protein localises to the membrane. The enzyme catalyses ADP(in) + ATP(out) = ADP(out) + ATP(in). It carries out the reaction H(+)(in) = H(+)(out). Its activity is regulated as follows. The matrix-open state (m-state) is inhibited by the membrane-permeable bongkrekic acid (BKA). The cytoplasmic-open state (c-state) is inhibited by the membrane-impermeable toxic inhibitor carboxyatractyloside (CATR). Proton transporter activity is inhibited by ADP:ATP antiporter activity. ADP:ATP antiporter that mediates import of ADP into the mitochondrial matrix for ATP synthesis, and export of ATP out to fuel the cell. Cycles between the cytoplasmic-open state (c-state) and the matrix-open state (m-state): operates by the alternating access mechanism with a single substrate-binding site intermittently exposed to either the cytosolic (c-state) or matrix (m-state) side of the inner mitochondrial membrane. In addition to its ADP:ATP antiporter activity, also involved in mitochondrial uncoupling and mitochondrial permeability transition pore (mPTP) activity. Plays a role in mitochondrial uncoupling by acting as a proton transporter: proton transport uncouples the proton flows via the electron transport chain and ATP synthase to reduce the efficiency of ATP production and cause mitochondrial thermogenesis. Proton transporter activity is inhibited by ADP:ATP antiporter activity, suggesting that SLC25A6/ANT3 acts as a master regulator of mitochondrial energy output by maintaining a delicate balance between ATP production (ADP:ATP antiporter activity) and thermogenesis (proton transporter activity). Proton transporter activity requires free fatty acids as cofactor, but does not transport it. Also plays a key role in mPTP opening, a non-specific pore that enables free passage of the mitochondrial membranes to solutes of up to 1.5 kDa, and which contributes to cell death. It is however unclear if SLC25A6/ANT3 constitutes a pore-forming component of mPTP or regulates it. The chain is ADP/ATP translocase 3 from Homo sapiens (Human).